Consider the following 240-residue polypeptide: Zinc finger CCCH domain-containing protein 52 (240 aa).

Disordered stretches follow at residues methionine 1–serine 37 and serine 81–glycine 106. The C3H1-type 1 zinc finger occupies glycine 36 to proline 64. A compositionally biased stretch (gly residues) spans glycine 89–glycine 104. The region spanning alanine 113–valine 177 is the KH domain. A C3H1-type 2 zinc finger spans residues asparagine 205–serine 232.

The sequence is that of Zinc finger CCCH domain-containing protein 52 from Arabidopsis thaliana (Mouse-ear cress).